Consider the following 103-residue polypeptide: Phosphoribosyl-ATP pyrophosphatase (103 aa).

This sequence belongs to the PRA-PH family.

The protein resides in the cytoplasm. The enzyme catalyses 1-(5-phospho-beta-D-ribosyl)-ATP + H2O = 1-(5-phospho-beta-D-ribosyl)-5'-AMP + diphosphate + H(+). It participates in amino-acid biosynthesis; L-histidine biosynthesis; L-histidine from 5-phospho-alpha-D-ribose 1-diphosphate: step 2/9. This chain is Phosphoribosyl-ATP pyrophosphatase (hisE), found in Listeria monocytogenes serovar 1/2a (strain ATCC BAA-679 / EGD-e).